We begin with the raw amino-acid sequence, 313 residues long: Cytochrome c biogenesis protein CcsA (313 aa).

The next 8 membrane-spanning stretches (helical) occupy residues Ile9 to Phe29, Gly44 to Gly64, Leu71 to Phe91, Gly111 to Leu131, Met143 to Ile163, Val217 to Asn237, Trp244 to Leu264, and Ala278 to Leu298.

This sequence belongs to the CcmF/CycK/Ccl1/NrfE/CcsA family. In terms of assembly, may interact with Ccs1.

Its subcellular location is the plastid. It localises to the chloroplast thylakoid membrane. Its function is as follows. Required during biogenesis of c-type cytochromes (cytochrome c6 and cytochrome f) at the step of heme attachment. This Solanum lycopersicum (Tomato) protein is Cytochrome c biogenesis protein CcsA.